The chain runs to 382 residues: Na(+)/H(+) antiporter NhaA 2 (382 aa).

11 helical membrane passes run Met-7–Leu-27, Leu-58–Leu-78, Ser-94–Ile-114, Gly-124–Gly-144, Leu-153–Phe-173, Leu-178–Tyr-198, Tyr-199–Leu-219, Asn-255–Ile-275, Ile-291–Ile-311, Phe-327–Leu-347, and Leu-361–Val-381.

It belongs to the NhaA Na(+)/H(+) (TC 2.A.33) antiporter family.

The protein resides in the cell inner membrane. The catalysed reaction is Na(+)(in) + 2 H(+)(out) = Na(+)(out) + 2 H(+)(in). Na(+)/H(+) antiporter that extrudes sodium in exchange for external protons. The sequence is that of Na(+)/H(+) antiporter NhaA 2 from Campylobacter jejuni subsp. jejuni serotype O:6 (strain 81116 / NCTC 11828).